A 104-amino-acid polypeptide reads, in one-letter code: Transcription factor ILI1 (104 aa).

A compositionally biased stretch (basic residues) spans 1-11 (MSSSRRSRSRR). The interval 1–27 (MSSSRRSRSRRAGSSVPSSSSSSRTSI) is disordered. The segment covering 12–27 (AGSSVPSSSSSSRTSI) has biased composition (low complexity). A bHLH domain is found at 16-71 (VPSSSSSSRTSISEDQIAELLSKLQALLPESQARNGAHRGSAARVLQETCSYIRSL).

The protein belongs to the bHLH protein family. Interacts with IBH1.

Its function is as follows. Atypical and probable non DNA-binding bHLH transcription factor that acts as a positive regulator of cell elongation and plant development. Binds the transcription repressor IBH1 and forms a heterodimer of antagonistic bHLH transcription factors that function downstream of BZR1 to mediate brassinosteroid regulation of cell elongation and lamina inclination. The polypeptide is Transcription factor ILI1 (ILI1) (Oryza sativa subsp. indica (Rice)).